A 394-amino-acid polypeptide reads, in one-letter code: 1-deoxy-D-xylulose 5-phosphate reductoisomerase (394 aa).

7 residues coordinate NADPH: Thr12, Gly13, Ser14, Ile15, Lys39, Gln40, and Asn126. 1-deoxy-D-xylulose 5-phosphate is bound at residue Lys127. Glu128 serves as a coordination point for NADPH. Asp152 lines the Mn(2+) pocket. Residues Ser153, Glu154, Ser183, and His206 each coordinate 1-deoxy-D-xylulose 5-phosphate. A Mn(2+)-binding site is contributed by Glu154. Residue Gly212 coordinates NADPH. Positions 219, 224, 225, and 228 each coordinate 1-deoxy-D-xylulose 5-phosphate. Glu228 is a binding site for Mn(2+).

It belongs to the DXR family. Mg(2+) serves as cofactor. It depends on Mn(2+) as a cofactor.

The catalysed reaction is 2-C-methyl-D-erythritol 4-phosphate + NADP(+) = 1-deoxy-D-xylulose 5-phosphate + NADPH + H(+). The protein operates within isoprenoid biosynthesis; isopentenyl diphosphate biosynthesis via DXP pathway; isopentenyl diphosphate from 1-deoxy-D-xylulose 5-phosphate: step 1/6. Its function is as follows. Catalyzes the NADPH-dependent rearrangement and reduction of 1-deoxy-D-xylulose-5-phosphate (DXP) to 2-C-methyl-D-erythritol 4-phosphate (MEP). In Neisseria meningitidis serogroup A / serotype 4A (strain DSM 15465 / Z2491), this protein is 1-deoxy-D-xylulose 5-phosphate reductoisomerase.